Consider the following 538-residue polypeptide: GSY2-interacting protein PIG2 (538 aa).

A phosphoserine mark is found at Ser-162, Ser-196, Ser-296, and Ser-304. A CBM21 domain is found at Leu-384–Asp-508.

Its function is as follows. Interacts with glycogen synthase 2 (GSY2); possibly also interacts with phosphatase 1 (GLC7). The chain is GSY2-interacting protein PIG2 (PIG2) from Saccharomyces cerevisiae (strain ATCC 204508 / S288c) (Baker's yeast).